The sequence spans 305 residues: Coenzyme PQQ synthesis protein B (305 aa).

Belongs to the PqqB family.

It functions in the pathway cofactor biosynthesis; pyrroloquinoline quinone biosynthesis. May be involved in the transport of PQQ or its precursor to the periplasm. This chain is Coenzyme PQQ synthesis protein B, found in Cupriavidus necator (strain ATCC 17699 / DSM 428 / KCTC 22496 / NCIMB 10442 / H16 / Stanier 337) (Ralstonia eutropha).